A 495-amino-acid polypeptide reads, in one-letter code: DNA-directed RNA polymerase subunit alpha (495 aa).

The interval 1-301 (MPYIKHIETK…RMLASLQAPP (301 aa)) is alpha N-terminal domain (alpha-NTD). Disordered stretches follow at residues 159–227 (SLVP…EAPH) and 391–495 (QEQV…PEET). Positions 170-237 (PRDPLEPEND…IPSMRDDHMT (68 aa)) are insert. Over residues 172 to 186 (DPLEPENDSKSETKS) the composition is skewed to basic and acidic residues. Composition is skewed to polar residues over residues 207-219 (VNAQ…SNST) and 391-403 (QEQV…SQIA). Residues 317–495 (AKEIALTPIE…LSSSQNPEET (179 aa)) form an alpha C-terminal domain (alpha-CTD) region. A compositionally biased stretch (basic and acidic residues) spans 417-426 (RPIDSKETRR). Over residues 444–453 (RKSSKTKVKA) the composition is skewed to basic residues. Polar residues-rich tracts occupy residues 464–473 (KSANLQQAEE) and 486–495 (LSSSQNPEET).

Belongs to the RNA polymerase alpha chain family. In plastids the minimal PEP RNA polymerase catalytic core is composed of four subunits: alpha, beta, beta', and beta''. When a (nuclear-encoded) sigma factor is associated with the core the holoenzyme is formed, which can initiate transcription.

The protein localises to the plastid. Its subcellular location is the chloroplast. The catalysed reaction is RNA(n) + a ribonucleoside 5'-triphosphate = RNA(n+1) + diphosphate. Its function is as follows. DNA-dependent RNA polymerase catalyzes the transcription of DNA into RNA using the four ribonucleoside triphosphates as substrates. The protein is DNA-directed RNA polymerase subunit alpha of Nephroselmis olivacea (Green alga).